The sequence spans 616 residues: Dihydroxy-acid dehydratase (616 aa).

D81 contacts Mg(2+). C122 is a binding site for [2Fe-2S] cluster. Residues D123 and K124 each contribute to the Mg(2+) site. Residue K124 is modified to N6-carboxylysine. C195 lines the [2Fe-2S] cluster pocket. E491 provides a ligand contact to Mg(2+). S517 acts as the Proton acceptor in catalysis.

It belongs to the IlvD/Edd family. As to quaternary structure, homodimer. Requires [2Fe-2S] cluster as cofactor. Mg(2+) is required as a cofactor.

It carries out the reaction (2R)-2,3-dihydroxy-3-methylbutanoate = 3-methyl-2-oxobutanoate + H2O. The enzyme catalyses (2R,3R)-2,3-dihydroxy-3-methylpentanoate = (S)-3-methyl-2-oxopentanoate + H2O. It participates in amino-acid biosynthesis; L-isoleucine biosynthesis; L-isoleucine from 2-oxobutanoate: step 3/4. It functions in the pathway amino-acid biosynthesis; L-valine biosynthesis; L-valine from pyruvate: step 3/4. In terms of biological role, functions in the biosynthesis of branched-chain amino acids. Catalyzes the dehydration of (2R,3R)-2,3-dihydroxy-3-methylpentanoate (2,3-dihydroxy-3-methylvalerate) into 2-oxo-3-methylpentanoate (2-oxo-3-methylvalerate) and of (2R)-2,3-dihydroxy-3-methylbutanoate (2,3-dihydroxyisovalerate) into 2-oxo-3-methylbutanoate (2-oxoisovalerate), the penultimate precursor to L-isoleucine and L-valine, respectively. The polypeptide is Dihydroxy-acid dehydratase (Methylocella silvestris (strain DSM 15510 / CIP 108128 / LMG 27833 / NCIMB 13906 / BL2)).